Consider the following 467-residue polypeptide: Histidine--tRNA ligase (467 aa).

The protein belongs to the class-II aminoacyl-tRNA synthetase family. Homodimer.

The protein localises to the cytoplasm. The enzyme catalyses tRNA(His) + L-histidine + ATP = L-histidyl-tRNA(His) + AMP + diphosphate + H(+). This Gloeobacter violaceus (strain ATCC 29082 / PCC 7421) protein is Histidine--tRNA ligase.